A 69-amino-acid chain; its full sequence is MMIQKYIKKDCNHGYDNGEYNLLSNDNLIIHYKNYNDALYGESIYSHNSLGVLQNVHAVLSTYYCLKFN.

This is an uncharacterized protein from Acheta domesticus (House cricket).